Consider the following 100-residue polypeptide: Urease subunit gamma (100 aa).

It belongs to the urease gamma subunit family. As to quaternary structure, heterotrimer of UreA (gamma), UreB (beta) and UreC (alpha) subunits. Three heterotrimers associate to form the active enzyme.

The protein localises to the cytoplasm. The enzyme catalyses urea + 2 H2O + H(+) = hydrogencarbonate + 2 NH4(+). The protein operates within nitrogen metabolism; urea degradation; CO(2) and NH(3) from urea (urease route): step 1/1. This chain is Urease subunit gamma, found in Chelativorans sp. (strain BNC1).